A 1443-amino-acid polypeptide reads, in one-letter code: Lysophospholipase NTE1 (1443 aa).

Residues 1–59 are Lumenal-facing; that stretch reads MEEELAIEDLPRLTGTVSLNNGLLHSIYNETTVFKILRWSLVEIPKYILKLMSKNLEIN. A helical transmembrane segment spans residues 60 to 80; that stretch reads LNVSSILIITLLIAAGILVIV. The Cytoplasmic portion of the chain corresponds to 81–1443; sequence RYKFLTGYSE…RIKMYRRNTM (1363 aa). Residues 103 to 118 show a composition bias toward polar residues; it reads ALGQQSTNYPKSTSSG. Disordered regions lie at residues 103-122 and 199-251; these read ALGQ…LFVE and KYDE…GKMH. A compositionally biased stretch (acidic residues) spans 210 to 235; sequence EGEEADEDDEEEEKEVGDDGDDEMDV. A nucleoside 3',5'-cyclic phosphate is bound by residues 619–750 and 746–871; these read LYKR…LKSL and KLKS…VASK. The region spanning 1136–1300 is the PNPLA domain; it reads LVLGGGGSRG…LDNLPVMEMK (165 aa). A GXGXXG motif is present at residues 1140–1145; the sequence is GGGSRG. A GXSXG motif is present at residues 1167-1171; that stretch reads GTSIG. Ser-1169 serves as the catalytic Nucleophile. The active-site Proton acceptor is the Asp-1287. Positions 1287–1289 match the DGA/G motif; the sequence is DGG.

This sequence belongs to the NTE family.

The protein localises to the endoplasmic reticulum membrane. The enzyme catalyses a 1-acyl-sn-glycero-3-phosphocholine + H2O = sn-glycerol 3-phosphocholine + a fatty acid + H(+). Its activity is regulated as follows. Inhibited by organophosphorus esters. Functionally, intracellular phospholipase B that catalyzes the double deacylation of phosphatidylcholine (PC) to glycerophosphocholine (GroPCho). Plays an important role in membrane lipid homeostasis. Responsible for the rapid PC turnover in response to inositol, elevated temperatures, or when choline is present in the growth medium. The polypeptide is Lysophospholipase NTE1 (NTE1) (Lodderomyces elongisporus (strain ATCC 11503 / CBS 2605 / JCM 1781 / NBRC 1676 / NRRL YB-4239) (Yeast)).